The chain runs to 434 residues: MLIEPKMIGSSEGQALLESLLNRFQIGDSGCQSAVEDILTAVRQEGDAAVVKYCRRFDCPDMTASALAVTAAEIAAAYELVDAAFLETLAAAIERIHSFHEREMEDSWMQTREDGTIVGRLVRPVDSAGLYVPGGTGGSTPLVSSVLMNGIPAGIAGVTTRVMVTPPGKDGKISPHLLVAATEIGITEIYKAGSAWGIAALAYGTATIPRVDVIVGPGNQFVTEAKRLVSGMVRIDMIAGPSEVLIVADETADPVYIAADMLAQAEHDPQALSILLTTDRQVAEAVPAEIERQLKTLSRAEIAEKSIVDRAVILVVADIEEAIGLANDIAIEHLELMIVDPWAQVPHIRHAGAIFLGSHTPEAAGDYFAGPNHVLPTMGTARFASALGVETFLKKSSIISYSQTALQNDAEHIQRLANLEGLTAHANSVAVRVK.

Substrate is bound by residues S242, Q264, and H267. Zn(2+) contacts are provided by Q264 and H267. Residues E332 and H333 each act as proton acceptor in the active site. Substrate contacts are provided by H333, D366, E420, and H425. Zn(2+) is bound at residue D366. H425 serves as a coordination point for Zn(2+).

It belongs to the histidinol dehydrogenase family. Requires Zn(2+) as cofactor.

It carries out the reaction L-histidinol + 2 NAD(+) + H2O = L-histidine + 2 NADH + 3 H(+). It participates in amino-acid biosynthesis; L-histidine biosynthesis; L-histidine from 5-phospho-alpha-D-ribose 1-diphosphate: step 9/9. Its function is as follows. Catalyzes the sequential NAD-dependent oxidations of L-histidinol to L-histidinaldehyde and then to L-histidine. The protein is Histidinol dehydrogenase of Desulfotalea psychrophila (strain LSv54 / DSM 12343).